Consider the following 440-residue polypeptide: Xylose isomerase (440 aa).

Residues His101 and Asp104 contribute to the active site. 7 residues coordinate Mg(2+): Glu232, Glu268, His271, Asp296, Asp307, Asp309, and Asp339.

The protein belongs to the xylose isomerase family. As to quaternary structure, homotetramer. It depends on Mg(2+) as a cofactor.

It localises to the cytoplasm. The enzyme catalyses alpha-D-xylose = alpha-D-xylulofuranose. This Cronobacter sakazakii (strain ATCC BAA-894) (Enterobacter sakazakii) protein is Xylose isomerase.